Reading from the N-terminus, the 482-residue chain is UDP-N-acetylmuramate--L-alanine ligase (482 aa).

Position 129 to 135 (129 to 135) interacts with ATP; it reads GTHGKTT.

This sequence belongs to the MurCDEF family.

The protein localises to the cytoplasm. It carries out the reaction UDP-N-acetyl-alpha-D-muramate + L-alanine + ATP = UDP-N-acetyl-alpha-D-muramoyl-L-alanine + ADP + phosphate + H(+). It functions in the pathway cell wall biogenesis; peptidoglycan biosynthesis. Functionally, cell wall formation. This Acinetobacter baumannii (strain SDF) protein is UDP-N-acetylmuramate--L-alanine ligase.